The following is an 89-amino-acid chain: MAAMKSLATAILVVLLLRRLPRGLSQNCSAAIGELMTCGPYVLPGSNGAPSEQCCSALKAVNHGCLCETINIISSLPDHCSLPAVNCAA.

The first 25 residues, 1–25 (MAAMKSLATAILVVLLLRRLPRGLS), serve as a signal peptide directing secretion. 4 cysteine pairs are disulfide-bonded: C28–C65, C38–C54, C55–C80, and C67–C87.

It belongs to the A9/FIL1 family. As to expression, tapetum of anthers.

The protein localises to the secreted. The sequence is that of Protein M7 (M7) from Lilium henryi (Henry's lily).